The chain runs to 177 residues: Large ribosomal subunit protein uL6 (177 aa).

Belongs to the universal ribosomal protein uL6 family. As to quaternary structure, part of the 50S ribosomal subunit.

Its function is as follows. This protein binds to the 23S rRNA, and is important in its secondary structure. It is located near the subunit interface in the base of the L7/L12 stalk, and near the tRNA binding site of the peptidyltransferase center. The protein is Large ribosomal subunit protein uL6 of Tolumonas auensis (strain DSM 9187 / NBRC 110442 / TA 4).